We begin with the raw amino-acid sequence, 320 residues long: Mitochondrial thiamine pyrophosphate carrier 1 (320 aa).

3 Solcar repeats span residues 12-110, 119-205, and 213-308; these read GTRR…TTQA, PQPV…LRPS, and PFGS…TLRA. 6 helical membrane-spanning segments follow: residues 17–35, 91–107, 125–145, 180–197, 219–239, and 283–300; these read VVLAGGIAGLVSRFCVAPL, LMYVCYGGVQFTTYRTT, FVAGASAGGLATAATYPLDLL, GCSAAVGQIVPYMGLFFA, ALAGMIASVLAKTGVFPLDLV, and GLTVSLFKAAPASAVTMW.

The protein belongs to the mitochondrial carrier (TC 2.A.29) family.

It localises to the mitochondrion inner membrane. In terms of biological role, mitochondrial transporter that mediates uptake of thiamine pyrophosphate (ThPP) into mitochondria. This Aspergillus terreus (strain NIH 2624 / FGSC A1156) protein is Mitochondrial thiamine pyrophosphate carrier 1 (tpc1).